The primary structure comprises 702 residues: Ribosomal RNA large subunit methyltransferase K/L (702 aa).

One can recognise a THUMP domain in the interval 43–154 (LIYQSLMWSR…KETAHISLDL (112 aa)).

This sequence belongs to the methyltransferase superfamily. RlmKL family.

It is found in the cytoplasm. The catalysed reaction is guanosine(2445) in 23S rRNA + S-adenosyl-L-methionine = N(2)-methylguanosine(2445) in 23S rRNA + S-adenosyl-L-homocysteine + H(+). The enzyme catalyses guanosine(2069) in 23S rRNA + S-adenosyl-L-methionine = N(2)-methylguanosine(2069) in 23S rRNA + S-adenosyl-L-homocysteine + H(+). Specifically methylates the guanine in position 2445 (m2G2445) and the guanine in position 2069 (m7G2069) of 23S rRNA. This Enterobacter sp. (strain 638) protein is Ribosomal RNA large subunit methyltransferase K/L.